The primary structure comprises 130 residues: Prefoldin subunit alpha (130 aa).

It belongs to the prefoldin subunit alpha family. As to quaternary structure, heterohexamer of two alpha and four beta subunits.

Its subcellular location is the cytoplasm. Molecular chaperone capable of stabilizing a range of proteins. Seems to fulfill an ATP-independent, HSP70-like function in archaeal de novo protein folding. This chain is Prefoldin subunit alpha, found in Thermoplasma volcanium (strain ATCC 51530 / DSM 4299 / JCM 9571 / NBRC 15438 / GSS1).